The following is a 317-amino-acid chain: DNA-directed RNA polymerase III subunit RPC6 (317 aa).

It belongs to the eukaryotic RPC34/RPC39 RNA polymerase subunit family. In terms of assembly, component of the RNA polymerase III (Pol III) complex consisting of 17 subunits. Interacts with BRF1/TDS4.

It localises to the nucleus. In terms of biological role, DNA-dependent RNA polymerase catalyzes the transcription of DNA into RNA using the four ribonucleoside triphosphates as substrates. Specific peripheric component of RNA polymerase III which synthesizes small RNAs, such as 5S rRNA and tRNAs. Involved in recruitment of Pol III to the preinitiation complex. Involved in the configuration of an initiation-competent form of RNA polymerase. This chain is DNA-directed RNA polymerase III subunit RPC6 (RPC34), found in Saccharomyces cerevisiae (strain ATCC 204508 / S288c) (Baker's yeast).